The sequence spans 314 residues: Type II methyltransferase M.HpaI (314 aa).

The protein belongs to the N(4)/N(6)-methyltransferase family.

The enzyme catalyses a 2'-deoxyadenosine in DNA + S-adenosyl-L-methionine = an N(6)-methyl-2'-deoxyadenosine in DNA + S-adenosyl-L-homocysteine + H(+). Its function is as follows. A beta subtype methylase that recognizes the double-stranded sequence 5'-GTTAAC-3', methylates A-5 on both strands, and protects the DNA from cleavage by the HpaI endonuclease. The chain is Type II methyltransferase M.HpaI (hpaIM) from Haemophilus parainfluenzae.